The chain runs to 255 residues: 1-(5-phosphoribosyl)-5-[(5-phosphoribosylamino)methylideneamino] imidazole-4-carboxamide isomerase (255 aa).

The Proton acceptor role is filled by D8. Catalysis depends on D129, which acts as the Proton donor.

It belongs to the HisA/HisF family.

The protein localises to the cytoplasm. The enzyme catalyses 1-(5-phospho-beta-D-ribosyl)-5-[(5-phospho-beta-D-ribosylamino)methylideneamino]imidazole-4-carboxamide = 5-[(5-phospho-1-deoxy-D-ribulos-1-ylimino)methylamino]-1-(5-phospho-beta-D-ribosyl)imidazole-4-carboxamide. It functions in the pathway amino-acid biosynthesis; L-histidine biosynthesis; L-histidine from 5-phospho-alpha-D-ribose 1-diphosphate: step 4/9. The sequence is that of 1-(5-phosphoribosyl)-5-[(5-phosphoribosylamino)methylideneamino] imidazole-4-carboxamide isomerase from Prochlorococcus marinus (strain MIT 9515).